We begin with the raw amino-acid sequence, 919 residues long: Glutamate receptor ionotropic, kainate 3 (919 aa).

An N-terminal signal peptide occupies residues 1 to 31; sequence MTAPWRRLRSLVWEYWAGLLVCAFWIPDSRG. Residues 32 to 563 are Extracellular-facing; that stretch reads MPHVIRIGGI…VFSFLNPLSP (532 aa). N-linked (GlcNAc...) asparagine glycosylation is found at Asn-70, Asn-76, Asn-278, Asn-381, Asn-415, Asn-426, and Asn-433. Cys-99 and Cys-350 are disulfide-bonded. Residues Pro-518, Thr-520, and Arg-525 each contribute to the L-glutamate site. N-linked (GlcNAc...) asparagine glycosylation is found at Asn-548 and Asn-551. Residues 564–584 form a helical membrane-spanning segment; it reads DIWMYVLLAYLGVSCVLFVIA. The Cytoplasmic segment spans residues 585–636; sequence RFSPYEWYDAHPCNPGSEVVENNFTLLNSFWFGMGSLMQQGSELMPKALSTR. Residues 637–657 form a helical membrane-spanning segment; that stretch reads IIGGIWWFFTLIIISSYTANL. The Extracellular portion of the chain corresponds to 658–820; sequence AAFLTVERME…KEASALGIQK (163 aa). Positions 691, 692, and 739 each coordinate L-glutamate. A glycan (N-linked (GlcNAc...) asparagine) is linked at Asn-752. Residues 821-841 traverse the membrane as a helical segment; it reads IGGIFIVLAAGLVLSVLVAVG. At 842-919 the chain is on the cytoplasmic side; the sequence is EFVYKLRKTA…CSTSLAPVFP (78 aa). Phosphoserine is present on Ser-869. Residue Lys-887 forms a Glycyl lysine isopeptide (Lys-Gly) (interchain with G-Cter in SUMO1) linkage.

Belongs to the glutamate-gated ion channel (TC 1.A.10.1) family. GRIK3 subfamily. In terms of assembly, homotetramer, and heterotetramer with either GRIK4 or GRIK5. Can form functional heteromeric receptors with GRIK2. Interacts with PRKCABP. Interacts with NETO2.

It localises to the cell membrane. The protein resides in the postsynaptic cell membrane. The enzyme catalyses Ca(2+)(in) = Ca(2+)(out). Ionotropic glutamate receptor that functions as a cation-permeable ligand-gated ion channel, gated by L-glutamate and the glutamatergic agonist kainic acid. Binding of the excitatory neurotransmitter L-glutamate induces a conformation change, leading to the opening of the cation channel, and thereby converts the chemical signal to an electrical impulse. The receptor then desensitizes rapidly and enters a transient inactive state, characterized by the presence of bound agonist. In association with GRIK2, involved in presynaptic facilitation of glutamate release at hippocampal mossy fiber synapses. The protein is Glutamate receptor ionotropic, kainate 3 (GRIK3) of Macaca fascicularis (Crab-eating macaque).